The sequence spans 257 residues: UPF0246 protein YaaA (257 aa).

Belongs to the UPF0246 family.

The polypeptide is UPF0246 protein YaaA (Salmonella typhi).